A 307-amino-acid chain; its full sequence is 4-hydroxy-3-methylbut-2-enyl diphosphate reductase (307 aa).

Cys-13 is a binding site for [4Fe-4S] cluster. The (2E)-4-hydroxy-3-methylbut-2-enyl diphosphate site is built by His-42 and His-75. Residues His-42 and His-75 each contribute to the dimethylallyl diphosphate site. Positions 42 and 75 each coordinate isopentenyl diphosphate. Cys-97 provides a ligand contact to [4Fe-4S] cluster. His-125 contacts (2E)-4-hydroxy-3-methylbut-2-enyl diphosphate. A dimethylallyl diphosphate-binding site is contributed by His-125. His-125 is a binding site for isopentenyl diphosphate. Glu-127 (proton donor) is an active-site residue. Thr-165 is a (2E)-4-hydroxy-3-methylbut-2-enyl diphosphate binding site. [4Fe-4S] cluster is bound at residue Cys-195. (2E)-4-hydroxy-3-methylbut-2-enyl diphosphate is bound by residues Ser-223, Ser-224, Asn-225, and Ser-267. Residues Ser-223, Ser-224, Asn-225, and Ser-267 each contribute to the dimethylallyl diphosphate site. Residues Ser-223, Ser-224, Asn-225, and Ser-267 each coordinate isopentenyl diphosphate.

The protein belongs to the IspH family. It depends on [4Fe-4S] cluster as a cofactor.

The catalysed reaction is isopentenyl diphosphate + 2 oxidized [2Fe-2S]-[ferredoxin] + H2O = (2E)-4-hydroxy-3-methylbut-2-enyl diphosphate + 2 reduced [2Fe-2S]-[ferredoxin] + 2 H(+). It carries out the reaction dimethylallyl diphosphate + 2 oxidized [2Fe-2S]-[ferredoxin] + H2O = (2E)-4-hydroxy-3-methylbut-2-enyl diphosphate + 2 reduced [2Fe-2S]-[ferredoxin] + 2 H(+). It participates in isoprenoid biosynthesis; dimethylallyl diphosphate biosynthesis; dimethylallyl diphosphate from (2E)-4-hydroxy-3-methylbutenyl diphosphate: step 1/1. The protein operates within isoprenoid biosynthesis; isopentenyl diphosphate biosynthesis via DXP pathway; isopentenyl diphosphate from 1-deoxy-D-xylulose 5-phosphate: step 6/6. Functionally, catalyzes the conversion of 1-hydroxy-2-methyl-2-(E)-butenyl 4-diphosphate (HMBPP) into a mixture of isopentenyl diphosphate (IPP) and dimethylallyl diphosphate (DMAPP). Acts in the terminal step of the DOXP/MEP pathway for isoprenoid precursor biosynthesis. The polypeptide is 4-hydroxy-3-methylbut-2-enyl diphosphate reductase (Chlamydia trachomatis serovar A (strain ATCC VR-571B / DSM 19440 / HAR-13)).